The primary structure comprises 921 residues: Isoleucine--tRNA ligase (921 aa).

Residues 57 to 67 carry the 'HIGH' region motif; sequence PYANGDIHMGH. An L-isoleucyl-5'-AMP-binding site is contributed by Glu552. The 'KMSKS' region signature appears at 593 to 597; that stretch reads KMSKS. Lys596 is a binding site for ATP. Positions 888, 891, 908, and 911 each coordinate Zn(2+).

It belongs to the class-I aminoacyl-tRNA synthetase family. IleS type 1 subfamily. In terms of assembly, monomer. It depends on Zn(2+) as a cofactor.

The protein resides in the cytoplasm. It catalyses the reaction tRNA(Ile) + L-isoleucine + ATP = L-isoleucyl-tRNA(Ile) + AMP + diphosphate. Its function is as follows. Catalyzes the attachment of isoleucine to tRNA(Ile). As IleRS can inadvertently accommodate and process structurally similar amino acids such as valine, to avoid such errors it has two additional distinct tRNA(Ile)-dependent editing activities. One activity is designated as 'pretransfer' editing and involves the hydrolysis of activated Val-AMP. The other activity is designated 'posttransfer' editing and involves deacylation of mischarged Val-tRNA(Ile). This chain is Isoleucine--tRNA ligase, found in Bacillus cereus (strain AH187).